The chain runs to 467 residues: 2-succinylbenzoate--CoA ligase (467 aa).

It belongs to the ATP-dependent AMP-binding enzyme family. MenE subfamily.

The enzyme catalyses 2-succinylbenzoate + ATP + CoA = 2-succinylbenzoyl-CoA + AMP + diphosphate. It functions in the pathway quinol/quinone metabolism; 1,4-dihydroxy-2-naphthoate biosynthesis; 1,4-dihydroxy-2-naphthoate from chorismate: step 5/7. It participates in quinol/quinone metabolism; menaquinone biosynthesis. Functionally, converts 2-succinylbenzoate (OSB) to 2-succinylbenzoyl-CoA (OSB-CoA). The chain is 2-succinylbenzoate--CoA ligase from Listeria monocytogenes serotype 4b (strain F2365).